A 167-amino-acid chain; its full sequence is Transmembrane protein 229B (167 aa).

The Cytoplasmic portion of the chain corresponds to 1-14 (MASAEPLTALSRWY). A helical membrane pass occupies residues 15–35 (LYAIHGYFCEVMFTAAWEFVV). Over 36 to 40 (NFNWK) the chain is Extracellular. A helical membrane pass occupies residues 41-61 (FPGVTSVWALFIYGTSILIVE). Topologically, residues 62-73 (RMYLRLRGRCPL) are cytoplasmic. A helical membrane pass occupies residues 74–94 (LLRCLIYTLWTYLWEFTTGFI). Over 95–111 (LRQFNACPWDYSQFDFD) the chain is Extracellular. The helical transmembrane segment at 112-132 (FMGLITLEYAVPWFCGALLVE) threads the bilayer. Over 133-167 (QFVIRNTLRLRFDKDAEPGEPSGALALANGHVKTD) the chain is Cytoplasmic.

It belongs to the TMEM229 family.

It is found in the membrane. The chain is Transmembrane protein 229B (TMEM229B) from Bos taurus (Bovine).